A 164-amino-acid chain; its full sequence is V-type proton ATPase 16 kDa proteolipid subunit (164 aa).

Over 1–9 (MASFSGDET) the chain is Lumenal. A helical membrane pass occupies residues 10–32 (APFFGFLGAAAALVFSCMGAAYG). Topologically, residues 33–54 (TAKSGVGVASMGVMRPELVMKS) are cytoplasmic. A helical transmembrane segment spans residues 55 to 75 (IVPVVMAGVLGIYGLIIAVII). At 76-94 (STGINPKAKSYYLFDGYAH) the chain is on the lumenal side. A helical membrane pass occupies residues 95 to 116 (LSSGLACGLAGLSAGMAIGIVG). Topologically, residues 117–128 (DAGVRANAQQPK) are cytoplasmic. Residues 129–154 (LFVGMILILIFAEALALYGLIVGIIL) form a helical membrane-spanning segment. Topologically, residues 155–164 (SSRAGQSRAD) are lumenal.

This sequence belongs to the V-ATPase proteolipid subunit family. In terms of assembly, V-ATPase is a heteromultimeric enzyme composed of a peripheral catalytic V1 complex (main components: subunits A, B, C, D, E, and F) attached to an integral membrane V0 proton pore complex (main component: the proteolipid protein; which is present as a hexamer that forms the proton-conducting pore).

Its subcellular location is the vacuole membrane. In terms of biological role, proton-conducting pore forming subunit of the membrane integral V0 complex of vacuolar ATPase. V-ATPase is responsible for acidifying a variety of intracellular compartments in eukaryotic cells. The chain is V-type proton ATPase 16 kDa proteolipid subunit from Vigna radiata var. radiata (Mung bean).